We begin with the raw amino-acid sequence, 202 residues long: MDLSPNPDSPPSGGGNGGGGGSSSSNSSPSMGAGAPQSPSRYEAQKRRDWNTFGQYLRNHRPPLSLAQCSGAHVLEFLRYLDQFGKTKVHTAACPFFGHPSPPAPCPCPLRQAWGSLDALVGRLRAAFEENGGRPESNPFAARAVRLYLREVREHQARARGVSYEKKKRKKPQQQQLQGGDSSGLHGHQHHPPPPPPAGAAC.

Disordered regions lie at residues 1-44 and 158-202; these read MDLS…RYEA and RARG…GAAC. Positions 12–22 are enriched in gly residues; sequence SGGGNGGGGGS. Low complexity predominate over residues 23 to 36; that stretch reads SSSNSSPSMGAGAP. The ALOG domain maps to 41 to 168; it reads RYEAQKRRDW…ARGVSYEKKK (128 aa). Residues 166–170 carry the Nuclear localization signal motif; that stretch reads KKKRK. Low complexity predominate over residues 173–186; it reads QQQQLQGGDSSGLH. Positions 192–202 are enriched in pro residues; that stretch reads PPPPPPAGAAC.

Belongs to the plant homeotic and developmental regulators ALOG protein family.

It is found in the nucleus. Functionally, probable transcription regulator that acts as a developmental regulator by promoting cell growth in response to light. The polypeptide is Protein G1-like4 (Oryza sativa subsp. indica (Rice)).